The following is a 212-amino-acid chain: Holliday junction branch migration complex subunit RuvA (212 aa).

A domain I region spans residues methionine 1–leucine 63. The interval glutamate 64–glycine 142 is domain II. The flexible linker stretch occupies residues glycine 143 to proline 155. The tract at residues alanine 156–glycine 212 is domain III.

This sequence belongs to the RuvA family. Homotetramer. Forms an RuvA(8)-RuvB(12)-Holliday junction (HJ) complex. HJ DNA is sandwiched between 2 RuvA tetramers; dsDNA enters through RuvA and exits via RuvB. An RuvB hexamer assembles on each DNA strand where it exits the tetramer. Each RuvB hexamer is contacted by two RuvA subunits (via domain III) on 2 adjacent RuvB subunits; this complex drives branch migration. In the full resolvosome a probable DNA-RuvA(4)-RuvB(12)-RuvC(2) complex forms which resolves the HJ.

It localises to the cytoplasm. In terms of biological role, the RuvA-RuvB-RuvC complex processes Holliday junction (HJ) DNA during genetic recombination and DNA repair, while the RuvA-RuvB complex plays an important role in the rescue of blocked DNA replication forks via replication fork reversal (RFR). RuvA specifically binds to HJ cruciform DNA, conferring on it an open structure. The RuvB hexamer acts as an ATP-dependent pump, pulling dsDNA into and through the RuvAB complex. HJ branch migration allows RuvC to scan DNA until it finds its consensus sequence, where it cleaves and resolves the cruciform DNA. This chain is Holliday junction branch migration complex subunit RuvA, found in Paramagnetospirillum magneticum (strain ATCC 700264 / AMB-1) (Magnetospirillum magneticum).